We begin with the raw amino-acid sequence, 178 residues long: uncharacterized protein (178 aa).

Positions 1–16 (MNKRTSVDASKEDLHP) are enriched in basic and acidic residues. The segment at 1–43 (MNKRTSVDASKEDLHPADPQSGEGVPPNRKNTKTSPRGEGTAP) is disordered.

This is an uncharacterized protein from Homo sapiens (Human).